The chain runs to 261 residues: ATP synthase subunit a (261 aa).

8 consecutive transmembrane segments (helical) span residues 30 to 50 (VLFT…GLFM), 63 to 83 (WQVA…ANIG), 96 to 116 (LFMF…VLGL), 125 to 145 (IAIT…VGFW), 151 to 171 (FFSL…IAPI), 187 to 207 (LFVA…FVIN), 214 to 234 (LWLG…ISAL), and 235 to 255 (ELLV…LYIN).

It belongs to the ATPase A chain family. In terms of assembly, F-type ATPases have 2 components, CF(1) - the catalytic core - and CF(0) - the membrane proton channel. CF(1) has five subunits: alpha(3), beta(3), gamma(1), delta(1), epsilon(1). CF(0) has three main subunits: a(1), b(2) and c(9-12). The alpha and beta chains form an alternating ring which encloses part of the gamma chain. CF(1) is attached to CF(0) by a central stalk formed by the gamma and epsilon chains, while a peripheral stalk is formed by the delta and b chains.

Its subcellular location is the cell inner membrane. Functionally, key component of the proton channel; it plays a direct role in the translocation of protons across the membrane. The polypeptide is ATP synthase subunit a (Sphingopyxis alaskensis (strain DSM 13593 / LMG 18877 / RB2256) (Sphingomonas alaskensis)).